The following is a 139-amino-acid chain: Transcription antitermination protein NusB (139 aa).

Belongs to the NusB family.

Its function is as follows. Involved in transcription antitermination. Required for transcription of ribosomal RNA (rRNA) genes. Binds specifically to the boxA antiterminator sequence of the ribosomal RNA (rrn) operons. This chain is Transcription antitermination protein NusB, found in Baumannia cicadellinicola subsp. Homalodisca coagulata.